A 177-amino-acid chain; its full sequence is Large ribosomal subunit protein uL6 (177 aa).

The protein belongs to the universal ribosomal protein uL6 family. Part of the 50S ribosomal subunit.

Its function is as follows. This protein binds to the 23S rRNA, and is important in its secondary structure. It is located near the subunit interface in the base of the L7/L12 stalk, and near the tRNA binding site of the peptidyltransferase center. In Rhizobium leguminosarum bv. trifolii (strain WSM2304), this protein is Large ribosomal subunit protein uL6.